The chain runs to 569 residues: Urease subunit alpha (569 aa).

Residues 131–569 (GGIDAHIHWI…LPLAQRYFLF (439 aa)) form the Urease domain. Ni(2+)-binding residues include His-136, His-138, and Lys-219. Lys-219 carries the post-translational modification N6-carboxylysine. Residue His-221 participates in substrate binding. His-248 and His-274 together coordinate Ni(2+). Catalysis depends on His-322, which acts as the Proton donor. Asp-362 provides a ligand contact to Ni(2+).

This sequence belongs to the metallo-dependent hydrolases superfamily. Urease alpha subunit family. In terms of assembly, heterotrimer of UreA (gamma), UreB (beta) and UreC (alpha) subunits. Three heterotrimers associate to form the active enzyme. It depends on Ni cation as a cofactor. Post-translationally, carboxylation allows a single lysine to coordinate two nickel ions.

The protein resides in the cytoplasm. It catalyses the reaction urea + 2 H2O + H(+) = hydrogencarbonate + 2 NH4(+). It participates in nitrogen metabolism; urea degradation; CO(2) and NH(3) from urea (urease route): step 1/1. This is Urease subunit alpha from Magnetococcus marinus (strain ATCC BAA-1437 / JCM 17883 / MC-1).